The sequence spans 288 residues: Eukaryotic translation initiation factor 3 subunit G (288 aa).

2 disordered regions span residues 1-33 (MSKL…NKDG) and 156-197 (DEPT…GGER). Residues 208–286 (ATLRVTNVSE…LILRVEFAKR (79 aa)) enclose the RRM domain.

This sequence belongs to the eIF-3 subunit G family. As to quaternary structure, component of the eukaryotic translation initiation factor 3 (eIF-3) complex.

It localises to the cytoplasm. Its function is as follows. RNA-binding component of the eukaryotic translation initiation factor 3 (eIF-3) complex, which is involved in protein synthesis of a specialized repertoire of mRNAs and, together with other initiation factors, stimulates binding of mRNA and methionyl-tRNAi to the 40S ribosome. The eIF-3 complex specifically targets and initiates translation of a subset of mRNAs involved in cell proliferation. This subunit can bind 18S rRNA. The chain is Eukaryotic translation initiation factor 3 subunit G (tif35) from Aspergillus niger (strain ATCC MYA-4892 / CBS 513.88 / FGSC A1513).